Here is a 311-residue protein sequence, read N- to C-terminus: MFKFILKRIALMFPLMIVVSFMTFLLTYITNENPAVTILHAQGTPNVTPELIAETNEKYGFNDPLLIQYKNWLLEAMQFNFGTSYITGDPVAERIGPAFMNTLKLTIISSVMVMITSIILGVVSALKRGKFTDRAIRSVAFFLTALPSYWIASILIIYVSVKLNILPTSGLTGPESYILPVIVITIAYAGIYFRNVRRSMVEQLNEDYVLYLRASGVKSITLMLHVLRNALQVAVSIFCMSIPMIMGGLVVIEYIFAWPGLGQLSLKAILEHDFPVIQAYVLIVAVLFIVFNTLADIINALLNPRLREGAR.

Helical transmembrane passes span isoleucine 9 to isoleucine 29, leucine 105 to alanine 125, valine 139 to valine 159, glycine 173 to phenylalanine 193, isoleucine 237 to alanine 257, and phenylalanine 274 to leucine 294. Positions phenylalanine 99–alanine 295 constitute an ABC transmembrane type-1 domain.

The protein belongs to the binding-protein-dependent transport system permease family. In terms of assembly, the complex is composed of two ATP-binding proteins (CntD and CntF), two transmembrane proteins (CntB and CntC) and a solute-binding protein (CntA).

The protein resides in the cell membrane. With respect to regulation, nickel/cobalt import is reduced in the presence of zinc. In terms of biological role, part of the ABC transporter complex CntABCDF (Opp1) involved in the uptake of metal in complex with the metallophore staphylopine (StP). Involved in the import of divalent metals ions such as nickel, cobalt and zinc. Probably responsible for the translocation of the substrate across the membrane. Plays a major role in nickel/cobalt import in zinc-depleted conditions. Contributes to virulence. Required for full urease activity in vitro. This chain is Metal-staphylopine import system permease protein CntB, found in Staphylococcus aureus (strain NCTC 8325 / PS 47).